The following is a 372-amino-acid chain: Rab9 effector protein with kelch motifs (372 aa).

Kelch repeat units lie at residues 49-95 (KVFI…FIPS), 100-146 (RIWV…TSSA), 151-200 (QLYV…VMVA), 204-250 (KLFI…SAVA), and 254-303 (HVYI…IIPW). At Ser133 the chain carries Phosphoserine. A disordered region spans residues 314-340 (SNSLTLNHEAEKEDSADKVMSHSGDSH). Over residues 321–340 (HEAEKEDSADKVMSHSGDSH) the composition is skewed to basic and acidic residues.

Interacts with PIKFYVE; the interaction recruits RABEPK to the endosomal membrane. Interacts with RAB9 in its GTP-bound conformation. In terms of processing, phosphorylated on Ser residues by PIKFYVE.

It localises to the cytoplasm. The protein localises to the endosome membrane. In terms of biological role, rab9 effector required for endosome to trans-Golgi network (TGN) transport. This chain is Rab9 effector protein with kelch motifs, found in Homo sapiens (Human).